Reading from the N-terminus, the 323-residue chain is Fructokinase-1 (323 aa).

This sequence belongs to the carbohydrate kinase PfkB family. As to expression, expressed in stems, at higher levels in roots, and hardly detectable in leaves.

It catalyses the reaction D-fructose + ATP = D-fructose 6-phosphate + ADP + H(+). The protein operates within glycan biosynthesis; starch biosynthesis. With respect to regulation, inhibited at high fructose. In terms of biological role, may play an important role in maintaining the flux of carbon towards starch formation in endosperm. May also be involved in a sugar-sensing pathway. The protein is Fructokinase-1 (FRK1) of Zea mays (Maize).